We begin with the raw amino-acid sequence, 292 residues long: 4-hydroxy-tetrahydrodipicolinate synthase (292 aa).

Threonine 44 provides a ligand contact to pyruvate. Tyrosine 132 acts as the Proton donor/acceptor in catalysis. The active-site Schiff-base intermediate with substrate is the lysine 161. Isoleucine 203 lines the pyruvate pocket.

Belongs to the DapA family. In terms of assembly, homotetramer.

Its subcellular location is the cytoplasm. The enzyme catalyses L-aspartate 4-semialdehyde + pyruvate = (2S,4S)-4-hydroxy-2,3,4,5-tetrahydrodipicolinate + H2O + H(+). The protein operates within amino-acid biosynthesis; L-lysine biosynthesis via DAP pathway; (S)-tetrahydrodipicolinate from L-aspartate: step 3/4. Its activity is regulated as follows. Is feedback inhibited by lysine. Is competitively inhibited by 2-oxobutyrate with respect to pyruvate. Functionally, catalyzes the condensation of (S)-aspartate-beta-semialdehyde [(S)-ASA] and pyruvate to 4-hydroxy-tetrahydrodipicolinate (HTPA). In Rhizobium meliloti (Ensifer meliloti), this protein is 4-hydroxy-tetrahydrodipicolinate synthase.